The sequence spans 147 residues: Small ribosomal subunit protein uS9 (147 aa).

Positions 128 to 147 (KERKKYGQMGARAKYRWSKR) are disordered.

Belongs to the universal ribosomal protein uS9 family.

This Aquifex aeolicus (strain VF5) protein is Small ribosomal subunit protein uS9 (rpsI).